The sequence spans 351 residues: Basic salivary proline-rich protein 3 (351 aa).

The N-terminal stretch at 1 to 16 (MLLILLSVALLALSSA) is a signal peptide. Q17 is subject to Pyrrolidone carboxylic acid. A disordered region spans residues 17 to 351 (QSLNEDVSQE…HRPPQGQPPQ (335 aa)). Residues 20–31 (NEDVSQEESPSV) show a composition bias toward polar residues. A Phosphoserine modification is found at S24. A run of 12 repeats spans residues 53–73 (PPGK…GPPP), 74–94 (RPGK…GPPP), 95–115 (RPGK…GPPP), 116–136 (RPGK…GPPP), 137–157 (RPGK…GPPP), 158–178 (RPGK…GPPP), 179–199 (HPGK…GPPP), 200–220 (RPGK…GPPP), 221–241 (RPGK…GPPP), 242–261 (RPGK…QGPP), 263–283 (RPGK…GPPP), and 284–304 (HPGK…RPPP). A 12 X 21 AA tandem repeats of [RHP]-P-G-K-P-[EQ]-G-[PQS]-P-[PS]-Q-[GE]-G-N-[QK]-[SP]-[QR]-[GR]-P-P-P region spans residues 53-304 (PPGKPEGRPP…EGNKPQRPPP (252 aa)). N66 carries N-linked (GlcNAc...) asparagine glycosylation. Residues 70–84 (GPPPRPGKPEGPPPQ) are compositionally biased toward pro residues. N-linked (GlcNAc...) asparagine glycosylation is present at N87. O-linked (Hex) serine glycosylation occurs at S89. Residues 99–111 (PEGQPPQGGNQSQ) are compositionally biased toward low complexity. The N-linked (GlcNAc...) asparagine glycan is linked to N108. Residues 112–126 (GPPPRPGKPEGPPPQ) show a composition bias toward pro residues. An N-linked (GlcNAc...) asparagine glycan is attached at N129. Residues 133 to 147 (GPPPRPGKPEGPPPQ) are compositionally biased toward pro residues. N-linked (GlcNAc...) asparagine glycosylation occurs at N150. Pro residues-rich tracts occupy residues 154–168 (GPPP…PPPQ) and 175–189 (GPPP…PPPQ). N-linked (GlcNAc...) asparagine glycosylation occurs at N192. The span at 196–210 (GPPPRPGKPEGPPPQ) shows a compositional bias: pro residues. N-linked (GlcNAc...) asparagine glycosylation is found at N213 and N234. 3 stretches are compositionally biased toward pro residues: residues 217 to 252 (GPPP…PPPQ), 259 to 270 (GPPPRPGKPEGP), and 279 to 351 (QGPP…QPPQ). A glycan (N-linked (Hex) asparagine; atypical) is linked at N297.

N- and O-glycosylated; contains about 50% carbohydrate. This is composed of highly fucosylated N-linked saccharides, the major structure is a biantennary asialosaccharide containing 2 fucose residues on one antenna and an unsubstituted terminal lactosamine sequence on the other. The Gram-negative bacterium F.nucleatum binds to carbohydrates containing unsubstituted GalBeta1,4GlcNAc residues. N-glycosylation on Asn-87 is prevalent in head and neck cancer patients. In terms of processing, proteolytically cleaved at the tripeptide Xaa-Pro-Gln, where Xaa in the P(3) position is mostly lysine. The endoprotease may be of microbial origin. Besides on the N-terminal of mature PRB3, pyroglutamate formation found on at least Gln-67, Gln-88, Gln-256 and Gln-337.

Its subcellular location is the secreted. Its function is as follows. Acts as a receptor for the Gram-negative bacterium F.nucleatum. This Homo sapiens (Human) protein is Basic salivary proline-rich protein 3 (PRB3).